The sequence spans 90 residues: Bombyxin D-1 (90 aa).

The N-terminal stretch at 1-18 (MKLLGFFLSWVSVCAIVS) is a signal peptide. 3 cysteine pairs are disulfide-bonded: cysteine 27-cysteine 77, cysteine 39-cysteine 90, and cysteine 76-cysteine 81. A propeptide spans 48–68 (SVAHYAGYGWPLLPSLSEERG) (c peptide like).

This sequence belongs to the insulin family. In terms of assembly, heterodimer of a B chain and an A chain linked by two disulfide bonds.

The protein localises to the secreted. Brain peptide responsible for activation of prothoracic glands to produce ecdysone in insects. This chain is Bombyxin D-1 (BBXD1), found in Bombyx mori (Silk moth).